A 286-amino-acid polypeptide reads, in one-letter code: Formamidopyrimidine-DNA glycosylase (286 aa).

Catalysis depends on P2, which acts as the Schiff-base intermediate with DNA. E3 functions as the Proton donor in the catalytic mechanism. K61 acts as the Proton donor; for beta-elimination activity in catalysis. Positions 103, 122, and 164 each coordinate DNA. The FPG-type zinc-finger motif lies at 250 to 284 (NAYGQTGEPCGRCGTQIVRENFMNRGSHYCPNCQK). The Proton donor; for delta-elimination activity role is filled by R274.

It belongs to the FPG family. In terms of assembly, monomer. The cofactor is Zn(2+).

It carries out the reaction Hydrolysis of DNA containing ring-opened 7-methylguanine residues, releasing 2,6-diamino-4-hydroxy-5-(N-methyl)formamidopyrimidine.. It catalyses the reaction 2'-deoxyribonucleotide-(2'-deoxyribose 5'-phosphate)-2'-deoxyribonucleotide-DNA = a 3'-end 2'-deoxyribonucleotide-(2,3-dehydro-2,3-deoxyribose 5'-phosphate)-DNA + a 5'-end 5'-phospho-2'-deoxyribonucleoside-DNA + H(+). In terms of biological role, involved in base excision repair of DNA damaged by oxidation or by mutagenic agents. Acts as a DNA glycosylase that recognizes and removes damaged bases. Has a preference for oxidized purines, such as 7,8-dihydro-8-oxoguanine (8-oxoG). Has AP (apurinic/apyrimidinic) lyase activity and introduces nicks in the DNA strand. Cleaves the DNA backbone by beta-delta elimination to generate a single-strand break at the site of the removed base with both 3'- and 5'-phosphates. This is Formamidopyrimidine-DNA glycosylase from Corynebacterium glutamicum (strain R).